The sequence spans 137 residues: NADPH-dependent 7-cyano-7-deazaguanine reductase (137 aa).

Residue Cys50 is the Thioimide intermediate of the active site. The active-site Proton donor is the Asp57. Substrate is bound by residues 72 to 74 and 91 to 92; these read VEL and HE.

The protein belongs to the GTP cyclohydrolase I family. QueF type 1 subfamily.

It localises to the cytoplasm. The catalysed reaction is 7-aminomethyl-7-carbaguanine + 2 NADP(+) = 7-cyano-7-deazaguanine + 2 NADPH + 3 H(+). The protein operates within tRNA modification; tRNA-queuosine biosynthesis. Catalyzes the NADPH-dependent reduction of 7-cyano-7-deazaguanine (preQ0) to 7-aminomethyl-7-deazaguanine (preQ1). The protein is NADPH-dependent 7-cyano-7-deazaguanine reductase of Synechococcus sp. (strain CC9902).